A 371-amino-acid chain; its full sequence is Peptide chain release factor 2 (371 aa).

N5-methylglutamine is present on Gln-251.

Belongs to the prokaryotic/mitochondrial release factor family. In terms of processing, methylated by PrmC. Methylation increases the termination efficiency of RF2.

It is found in the cytoplasm. Functionally, peptide chain release factor 2 directs the termination of translation in response to the peptide chain termination codons UGA and UAA. The sequence is that of Peptide chain release factor 2 from Arthrobacter sp. (strain FB24).